The following is a 214-amino-acid chain: Ribosomal RNA large subunit methyltransferase E (214 aa).

S-adenosyl-L-methionine-binding residues include G60, W62, D86, D102, and D127. K167 acts as the Proton acceptor in catalysis.

It belongs to the class I-like SAM-binding methyltransferase superfamily. RNA methyltransferase RlmE family.

Its subcellular location is the cytoplasm. It carries out the reaction uridine(2552) in 23S rRNA + S-adenosyl-L-methionine = 2'-O-methyluridine(2552) in 23S rRNA + S-adenosyl-L-homocysteine + H(+). Specifically methylates the uridine in position 2552 of 23S rRNA at the 2'-O position of the ribose in the fully assembled 50S ribosomal subunit. The chain is Ribosomal RNA large subunit methyltransferase E from Janthinobacterium sp. (strain Marseille) (Minibacterium massiliensis).